The sequence spans 64 residues: MPKLKTRKAALKRYKKTGAGNFLRRHAYKGHLLMKKSNAQKRKLSQRVCVSSGDSKPIKLMLPY.

Belongs to the bacterial ribosomal protein bL35 family.

The protein localises to the plastid. It is found in the chloroplast. In Thalassiosira pseudonana (Marine diatom), this protein is Large ribosomal subunit protein bL35c.